A 218-amino-acid polypeptide reads, in one-letter code: Small ribosomal subunit protein uS3c (218 aa).

One can recognise a KH type-2 domain in the interval 47 to 118 (VQKNMRISSG…RLNIAITRVA (72 aa)).

This sequence belongs to the universal ribosomal protein uS3 family. Part of the 30S ribosomal subunit.

The protein localises to the plastid. The protein resides in the chloroplast. The protein is Small ribosomal subunit protein uS3c (rps3) of Calycanthus floridus var. glaucus (Eastern sweetshrub).